Reading from the N-terminus, the 32-residue chain is Cytochrome b6-f complex subunit 6 (32 aa).

A helical membrane pass occupies residues 4–26 (ITSYVGLLFTALGFTLGLYFGLT).

The protein belongs to the PetL family. As to quaternary structure, the 4 large subunits of the cytochrome b6-f complex are cytochrome b6, subunit IV (17 kDa polypeptide, PetD), cytochrome f and the Rieske protein, while the 4 small subunits are PetG, PetL, PetM and PetN. The complex functions as a dimer.

The protein resides in the plastid. Its subcellular location is the chloroplast thylakoid membrane. In terms of biological role, component of the cytochrome b6-f complex, which mediates electron transfer between photosystem II (PSII) and photosystem I (PSI), cyclic electron flow around PSI, and state transitions. PetL is important for photoautotrophic growth as well as for electron transfer efficiency and stability of the cytochrome b6-f complex. This is Cytochrome b6-f complex subunit 6 from Tetradesmus obliquus (Green alga).